A 152-amino-acid polypeptide reads, in one-letter code: UPF0178 protein Bcer98_3021 (152 aa).

The protein belongs to the UPF0178 family.

The sequence is that of UPF0178 protein Bcer98_3021 from Bacillus cytotoxicus (strain DSM 22905 / CIP 110041 / 391-98 / NVH 391-98).